The chain runs to 868 residues: Leucine--tRNA ligase (868 aa).

Residues 42 to 52 carry the 'HIGH' region motif; that stretch reads PYPSGKLHMGH. Positions 627–631 match the 'KMSKS' region motif; it reads KMSKS. K630 lines the ATP pocket.

This sequence belongs to the class-I aminoacyl-tRNA synthetase family.

Its subcellular location is the cytoplasm. The catalysed reaction is tRNA(Leu) + L-leucine + ATP = L-leucyl-tRNA(Leu) + AMP + diphosphate. In Pseudomonas putida (strain GB-1), this protein is Leucine--tRNA ligase.